The following is a 440-amino-acid chain: R3H and coiled-coil domain-containing protein 1 (440 aa).

The R3H domain occupies 16 to 81; the sequence is NDFVHRIQEE…KRRTVICHQD (66 aa). Residues 154-225 are disordered; sequence TSVLKREAPA…LGPESQSGKG (72 aa). Residues 157-168 show a composition bias toward basic and acidic residues; sequence LKREAPAGRDPE. S236 is modified (phosphoserine). Positions 242 to 300 form a coiled coil; that stretch reads LEKGKESLLEKRLVAEEEEDEEEVEEDGPSSCSEDDYSELLQEITDNLTKKEIQIEKIH. The interval 254–276 is disordered; sequence LVAEEEEDEEEVEEDGPSSCSED. Positions 257 to 276 are enriched in acidic residues; it reads EEEEDEEEVEEDGPSSCSED.

In Homo sapiens (Human), this protein is R3H and coiled-coil domain-containing protein 1.